The following is a 312-amino-acid chain: DNA-directed RNA polymerase subunit alpha (312 aa).

Residues 1-226 are alpha N-terminal domain (alpha-NTD); that stretch reads MIEFEKPNIT…EHFKVFMSTD (226 aa). The interval 243–312 is alpha C-terminal domain (alpha-CTD); it reads NEKKLEMTIE…DLGLSLRQDD (70 aa).

Belongs to the RNA polymerase alpha chain family. In terms of assembly, homodimer. The RNAP catalytic core consists of 2 alpha, 1 beta, 1 beta' and 1 omega subunit. When a sigma factor is associated with the core the holoenzyme is formed, which can initiate transcription.

The catalysed reaction is RNA(n) + a ribonucleoside 5'-triphosphate = RNA(n+1) + diphosphate. Functionally, DNA-dependent RNA polymerase catalyzes the transcription of DNA into RNA using the four ribonucleoside triphosphates as substrates. The polypeptide is DNA-directed RNA polymerase subunit alpha (Lactobacillus johnsonii (strain CNCM I-12250 / La1 / NCC 533)).